Here is a 1984-residue protein sequence, read N- to C-terminus: Sodium channel protein type 9 subunit alpha (1984 aa).

Residues 1-125 (MAMLPPPGPQ…RRISIKILVH (125 aa)) are Cytoplasmic-facing. Residues 26 to 47 (RIAEGKTKEPKEEKKDDHDEGP) are compositionally biased toward basic and acidic residues. Residues 26–55 (RIAEGKTKEPKEEKKDDHDEGPKPSSDLEA) are disordered. An I repeat occupies 112–408 (FSPLRRISIK…VAMAYEEQNQ (297 aa)). The helical transmembrane segment at 126 to 145 (SLFSMLIMCTILTNCIFMTM) threads the bilayer. The Extracellular portion of the chain corresponds to 146–150 (NNPAE). Residues 151–172 (WTKNVEYTFTGIYTFESLVKIF) form a helical membrane-spanning segment. Residues 173-185 (ARGFCVGEFTFLR) are Cytoplasmic-facing. Residues 186–204 (DPWNWLDFIVIVFAYLTEF) traverse the membrane as a helical segment. Over 205–210 (VNLGNV) the chain is Extracellular. An N-linked (GlcNAc...) asparagine glycan is attached at Asn-209. The chain crosses the membrane as a helical span at residues 211–227 (SALRTFRVLRALKTISV). The Cytoplasmic segment spans residues 228-241 (IPGLKTIVGALIQS). The helical transmembrane segment at 242 to 267 (VKKLSDVIILTVFCLSVFALIGLQLF) threads the bilayer. Topologically, residues 268–344 (MGHLKHKCLR…PDYGYTSFDT (77 aa)) are extracellular. Cys-275 and Cys-322 are joined by a disulfide. Asn-281 carries N-linked (GlcNAc...) asparagine glycosylation. Residues 345-361 (FSWAFLALFRLMTQDYW) constitute an intramembrane region (pore-forming). The Extracellular segment spans residues 362 to 374 (ENLYQQTLRAAGK). Residues 375–400 (TYMIFFVVVIFLGSFYLINLILAVVA) traverse the membrane as a helical segment. Residues 401–742 (MAYEEQNQAN…FIYIIVMDPF (342 aa)) lie on the Cytoplasmic side of the membrane. Residues 459–469 (SSSETSKLSSK) are compositionally biased toward low complexity. 2 disordered regions span residues 459–517 (SSSE…LGVE) and 563–610 (GSET…PPML). Basic residues predominate over residues 472-484 (KERRNRRKKKNQK). Basic and acidic residues-rich tracts occupy residues 487 to 508 (SSGE…ESIS) and 571 to 583 (DEHS…ESRR). The stretch at 723-986 (CSPFWIKFKK…EEDTDANNLQ (264 aa)) is one II repeat. Residues 743–759 (VDLAITICIVLNTLFMA) traverse the membrane as a helical segment. Residues 760-768 (MEHHPMTEE) lie on the Extracellular side of the membrane. A helical transmembrane segment spans residues 769–793 (FKNVLVVGNLVFTGIFAAEMVLKLI). Topologically, residues 794–802 (AMDPYEYFQ) are cytoplasmic. The helical transmembrane segment at 803–819 (VGWNVFDSLIVTLSLVE) threads the bilayer. The Extracellular segment spans residues 820 to 828 (LFLADVEGL). Residues 829-845 (SVLRSFRLLRVFKLAKS) form a helical membrane-spanning segment. Topologically, residues 846–862 (WPTLNMLIKIIGNSVGP) are cytoplasmic. The chain crosses the membrane as a helical span at residues 863 to 885 (LGNLTLVLAIIVFIFAVVGMQLF). The Extracellular segment spans residues 886-912 (GKSYKECVCKINDDCSLPRWHMNDFFH). Cysteines 894 and 900 form a disulfide. The pore-forming intramembrane region spans 913–925 (SFLIVFRVLCGEW). Residues 926–937 (IETMWDCMEVAG) lie on the Extracellular side of the membrane. Cys-932 and Cys-941 form a disulfide bridge. Residues 938-964 (QAMCLIVYMMVMVIGNLVVLNLFLALL) form a helical membrane-spanning segment. Topologically, residues 965-1184 (LSSFSSDNLS…WWNIRKTCYR (220 aa)) are cytoplasmic. The disordered stretch occupies residues 1087–1146 (PIAPGESDLENMNTEELSSDSESEYSKERLNRSSSSECSTVDNALPGEGEEAEAEPVNSD). Residues 1118-1128 (RSSSSECSTVD) show a composition bias toward polar residues. The span at 1134 to 1146 (EGEEAEAEPVNSD) shows a compositional bias: acidic residues. The stretch at 1177 to 1485 (NIRKTCYRIV…KKYYNAMKKL (309 aa)) is one III repeat. A helical transmembrane segment spans residues 1185–1209 (IVEHSWFESFIVLMILLSSGALAFE). Residues 1210–1221 (DIYIEKKKTIKI) lie on the Extracellular side of the membrane. A helical transmembrane segment spans residues 1222–1247 (ILEYADKIFTYIFILEMLLKWVAYGY). Topologically, residues 1248–1249 (KT) are cytoplasmic. The chain crosses the membrane as a helical span at residues 1250–1275 (YFTNAWCWLDFLIVDVSLVTLVANTL). At 1276 to 1284 (GYSDLGPIK) the chain is on the extracellular side. A helical transmembrane segment spans residues 1285–1301 (SLRTLRALRPLRALSRF). Residues 1302–1314 (EGMRVVVNALIGA) are Cytoplasmic-facing. The chain crosses the membrane as a helical span at residues 1315–1339 (IPSIMNVLLVCLIFWLIFSIMGVNL). At 1340–1391 (FAGKFYQCVNTTDDSRFPTKQVSNRSECFALMNGSQNVRWKNLKVNFDNVGL) the chain is on the extracellular side. Cys-1347 and Cys-1367 are joined by a disulfide. Residues Asn-1349, Asn-1363, and Asn-1372 are each glycosylated (N-linked (GlcNAc...) asparagine). Positions 1392–1402 (RYLSLLQVATF) form an intramembrane region, pore-forming. The Extracellular segment spans residues 1403–1428 (KGWMDIMYAAVDSVNVDQQPSYEHNL). Residues 1429-1454 (YMYIYFVIFIIFGSFFTLNLFIGVII) form a helical membrane-spanning segment. Residues 1455 to 1511 (DNFNQQKKKLGGQDIFMTEEQKKYYNAMKKLGSKKPQKPIPRPGNKFQGCIFDLVTN) are Cytoplasmic-facing. Ser-1487 is modified (phosphoserine; by PKC). An IV repeat occupies 1494–1792 (IPRPGNKFQG…WEKFDPDATQ (299 aa)). The chain crosses the membrane as a helical span at residues 1512 to 1531 (QAFDITIMILICLNMVTMMV). Topologically, residues 1532–1542 (EKEGQSDYMTD) are extracellular. Residues 1543–1564 (VLYWINVVFIILFTGECVLKLI) traverse the membrane as a helical segment. Residues 1565-1573 (SLRHYYFTI) are Cytoplasmic-facing. A helical membrane pass occupies residues 1574-1595 (GWNIFDFVVVILSIVGMFLAEL). Residues 1596–1604 (IETYFVSPT) lie on the Extracellular side of the membrane. The helical transmembrane segment at 1605 to 1624 (LFRVIRLARIGRILRLIKGA) threads the bilayer. Residues 1625–1637 (KGIRTLLFALMMS) are Cytoplasmic-facing. A helical transmembrane segment spans residues 1638 to 1660 (LPALFNIGLLLFLVMFIYAIFGM). Residues 1661–1683 (SNFAYVKKEAGINDMFNFETFGN) are Extracellular-facing. Positions 1684-1696 (SMICLFQITTSAG) form an intramembrane region, pore-forming. The Extracellular segment spans residues 1697–1730 (WDGLLAPILNSAPPDCDPKKVHPGSSTEGDCGSP). The cysteines at positions 1712 and 1727 are disulfide-linked. The helical transmembrane segment at 1731–1756 (SVGIFYFVSYIIISFLVVVNMYIAVI) threads the bilayer. Residues 1757 to 1984 (LENFSVATEE…KGKDGKETKK (228 aa)) are Cytoplasmic-facing. Residues 1886–1915 (EDVSATVIQRAYRRYRLRQNVKNISSIYIK) enclose the IQ domain. The interval 1924–1984 (PNKGDIVFDN…KGKDGKETKK (61 aa)) is disordered. Positions 1933 to 1956 (NVNSSSPEKTDATASTISPPSYDS) are enriched in polar residues. Positions 1958–1984 (TKPDKEKYEKDKTEKEDKGKDGKETKK) are enriched in basic and acidic residues.

It belongs to the sodium channel (TC 1.A.1.10) family. Nav1.7/SCN9A subfamily. In terms of assembly, the Nav1.7 voltage-gated sodium channel consists of an ion-conducting alpha subunit SCN9A which is functional on its own regulated by one or more beta-1 (SCN1B), beta-2 (SCN2B), beta-3 (SCN3B) and beta-4 (SCN4B) subunits. SCN1B and SCN3B are non-covalently associated with SCN9A. SCN2B and SCN4B are disulfide-linked to SCN9A. SCN1B regulates channel inactivation. Interacts with NEDD4 and NEDD4L; regulates Nav1.7 activity most probably through ubiquitination and subsequent endocytosis. Interacts with TMEM233; modulates the gating properties of NaV1.7. Phosphorylation at Ser-1487 by PKC in a highly conserved cytoplasmic loop increases peak sodium currents. Post-translationally, ubiquitinated by NEDD4L; which may promote its endocytosis. As to expression, expressed in the sciatic nerve, spinal cord, brainstem, cerebellum and cortex, but not expressed in the lung, skeletal and cardiac muscles, kidney and liver.

The protein resides in the cell membrane. The protein localises to the cell projection. It is found in the neuron projection. It localises to the axon. It carries out the reaction Na(+)(in) = Na(+)(out). Pore-forming subunit of Nav1.7, a voltage-gated sodium (Nav) channel that directly mediates the depolarizing phase of action potentials in excitable membranes. Navs, also called VGSCs (voltage-gated sodium channels) or VDSCs (voltage-dependent sodium channels), operate by switching between closed and open conformations depending on the voltage difference across the membrane. In the open conformation they allow Na(+) ions to selectively pass through the pore, along their electrochemical gradient. The influx of Na(+) ions provokes membrane depolarization, initiating the propagation of electrical signals throughout cells and tissues. Nav1.7 plays a crucial role in controlling the excitability and action potential propagation from nociceptor neurons, thereby contributing to the sensory perception of pain. This chain is Sodium channel protein type 9 subunit alpha, found in Oryctolagus cuniculus (Rabbit).